A 356-amino-acid chain; its full sequence is UDP-N-acetylglucosamine--N-acetylmuramyl-(pentapeptide) pyrophosphoryl-undecaprenol N-acetylglucosamine transferase (356 aa).

Residues threonine 12–glycine 14, asparagine 124, arginine 163, serine 188, isoleucine 242, alanine 261–glutamate 266, and glutamine 287 contribute to the UDP-N-acetyl-alpha-D-glucosamine site.

It belongs to the glycosyltransferase 28 family. MurG subfamily.

It localises to the cell inner membrane. The catalysed reaction is di-trans,octa-cis-undecaprenyl diphospho-N-acetyl-alpha-D-muramoyl-L-alanyl-D-glutamyl-meso-2,6-diaminopimeloyl-D-alanyl-D-alanine + UDP-N-acetyl-alpha-D-glucosamine = di-trans,octa-cis-undecaprenyl diphospho-[N-acetyl-alpha-D-glucosaminyl-(1-&gt;4)]-N-acetyl-alpha-D-muramoyl-L-alanyl-D-glutamyl-meso-2,6-diaminopimeloyl-D-alanyl-D-alanine + UDP + H(+). Its pathway is cell wall biogenesis; peptidoglycan biosynthesis. Cell wall formation. Catalyzes the transfer of a GlcNAc subunit on undecaprenyl-pyrophosphoryl-MurNAc-pentapeptide (lipid intermediate I) to form undecaprenyl-pyrophosphoryl-MurNAc-(pentapeptide)GlcNAc (lipid intermediate II). The polypeptide is UDP-N-acetylglucosamine--N-acetylmuramyl-(pentapeptide) pyrophosphoryl-undecaprenol N-acetylglucosamine transferase (Ectopseudomonas mendocina (strain ymp) (Pseudomonas mendocina)).